Consider the following 970-residue polypeptide: Unconventional myosin-XIX (970 aa).

In terms of domain architecture, Myosin motor spans 35 to 758; it reads YKLDDLTRVN…MLELLECGRA (724 aa). Position 132–139 (132–139) interacts with ATP; it reads GESGAGKT. An actin-binding region spans residues 602 to 624; it reads LEQLLQVLHSTTPHYIRCIKPNS. Serine 685 carries the post-translational modification Phosphoserine. 2 IQ domains span residues 759 to 779 and 783 to 812; these read RVLE…RHRE and QWRA…AATV. The segment at 824-970 is myMOMA region; sequence MACLAAKELD…VTSSAFTGLG (147 aa).

It belongs to the TRAFAC class myosin-kinesin ATPase superfamily. Myosin family. In terms of assembly, myosin is a hexamer of 2 heavy chains and 4 light chains: interacts with myosin light chains MYL9 and MYL12B. As to expression, widely expressed in multiple tissues and cell lines.

The protein localises to the mitochondrion outer membrane. The protein resides in the cytoplasm. It is found in the cytoskeleton. Functionally, actin-based motor molecule with ATPase activity that localizes to the mitochondrion outer membrane. Motor protein that moves towards the plus-end of actin filaments. Required for mitochondrial inheritance during mitosis. May be involved in mitochondrial transport or positioning. This chain is Unconventional myosin-XIX, found in Homo sapiens (Human).